Here is a 154-residue protein sequence, read N- to C-terminus: UPF0178 protein ABC1688 (154 aa).

It belongs to the UPF0178 family.

The protein is UPF0178 protein ABC1688 of Shouchella clausii (strain KSM-K16) (Alkalihalobacillus clausii).